Reading from the N-terminus, the 157-residue chain is Putative 4-hydroxy-4-methyl-2-oxoglutarate aldolase (157 aa).

Substrate contacts are provided by residues 78 to 81 (GDVI) and Arg-100. Asp-101 is a binding site for a divalent metal cation.

Belongs to the class II aldolase/RraA-like family. In terms of assembly, homotrimer. Requires a divalent metal cation as cofactor.

The catalysed reaction is 4-hydroxy-4-methyl-2-oxoglutarate = 2 pyruvate. It carries out the reaction oxaloacetate + H(+) = pyruvate + CO2. Catalyzes the aldol cleavage of 4-hydroxy-4-methyl-2-oxoglutarate (HMG) into 2 molecules of pyruvate. Also contains a secondary oxaloacetate (OAA) decarboxylase activity due to the common pyruvate enolate transition state formed following C-C bond cleavage in the retro-aldol and decarboxylation reactions. The protein is Putative 4-hydroxy-4-methyl-2-oxoglutarate aldolase of Mycobacterium leprae (strain Br4923).